The sequence spans 75 residues: Translational regulator CsrA (75 aa).

This sequence belongs to the CsrA/RsmA family. As to quaternary structure, homodimer; the beta-strands of each monomer intercalate to form a hydrophobic core, while the alpha-helices form wings that extend away from the core.

The protein localises to the cytoplasm. A translational regulator that binds mRNA to regulate translation initiation and/or mRNA stability. Usually binds in the 5'-UTR at or near the Shine-Dalgarno sequence preventing ribosome-binding, thus repressing translation. Its main target seems to be the major flagellin gene, while its function is anatagonized by FliW. This chain is Translational regulator CsrA, found in Exiguobacterium sp. (strain ATCC BAA-1283 / AT1b).